A 310-amino-acid chain; its full sequence is Olfactory receptor 2A14 (310 aa).

Over 1–24 (MEGNKTWITDITLPRFQVGPALEI) the chain is Extracellular. The N-linked (GlcNAc...) asparagine glycan is linked to N4. A helical transmembrane segment spans residues 25–48 (LLCGLFSAFYTLTLLGNGVIFGII). Topologically, residues 49–56 (CLDCKLHT) are cytoplasmic. Residues 57-78 (PMYFFLSHLAIVDISYASNYVP) form a helical membrane-spanning segment. Topologically, residues 79–99 (KMLTNLMNQESTISFFPCIMQ) are extracellular. A disulfide bridge links C96 with C188. A helical membrane pass occupies residues 100-119 (TFLYLAFAHVECLILVVMSY). The Cytoplasmic segment spans residues 120–138 (DRYADICHPLRYNSLMSWR). The chain crosses the membrane as a helical span at residues 139-157 (VCTVLAVASWVFSFLLALV). Residues 158-194 (PLVLILSLPFCGPHEINHFFCEILSVLKLACADTWLN) are Extracellular-facing. The helical transmembrane segment at 195 to 218 (QVVIFAACVFILVGPLCLVLVSYL) threads the bilayer. The Cytoplasmic portion of the chain corresponds to 219–235 (RILAAILRIQSGEGRRK). The helical transmembrane segment at 236–258 (AFSTCSSHLCVVGLFFGSAIVTY) threads the bilayer. Residues 259-271 (MAPKSRHPEEQQK) lie on the Extracellular side of the membrane. Residues 272–291 (VLSLFYSLFNPMLNPLIYSL) form a helical membrane-spanning segment. Residues 292-310 (RNAEVKGALRRALRKERLT) lie on the Cytoplasmic side of the membrane.

This sequence belongs to the G-protein coupled receptor 1 family.

Its subcellular location is the cell membrane. Its function is as follows. Odorant receptor. The protein is Olfactory receptor 2A14 (OR2A14) of Homo sapiens (Human).